The primary structure comprises 102 residues: MIHKLTSEERKTRLEGLPHWTAVPGRDAIQRRLRFADFNEAFGFMTRVAIKAQEMNHHPEWFNVYNRVDITLSTHDADGLTERDIELARFIDGAAAHAQPGA.

Belongs to the pterin-4-alpha-carbinolamine dehydratase family.

It catalyses the reaction (4aS,6R)-4a-hydroxy-L-erythro-5,6,7,8-tetrahydrobiopterin = (6R)-L-erythro-6,7-dihydrobiopterin + H2O. The chain is Putative pterin-4-alpha-carbinolamine dehydratase from Burkholderia cenocepacia (strain HI2424).